The following is a 137-amino-acid chain: Putative nickel-responsive regulator (137 aa).

Ni(2+) contacts are provided by H79, H90, H92, and C98.

This sequence belongs to the transcriptional regulatory CopG/NikR family. Ni(2+) is required as a cofactor.

Transcriptional regulator. This Campylobacter concisus (strain 13826) protein is Putative nickel-responsive regulator.